A 382-amino-acid chain; its full sequence is Chaperone protein DnaJ (382 aa).

The J domain maps to 5–70 (DYYDLLGLSK…DKRAAYDRYG (66 aa)). Residues 138-216 (GTKVPINYVT…CSGSGRVRDE (79 aa)) form a CR-type zinc finger. Residues C151, C154, C168, C171, C190, C193, C204, and C207 each contribute to the Zn(2+) site. CXXCXGXG motif repeat units lie at residues 151–158 (CSSCSGSG), 168–175 (CNTCHGAG), 190–197 (CHVCNGEG), and 204–211 (CKKCSGSG).

This sequence belongs to the DnaJ family. Homodimer. Zn(2+) serves as cofactor.

Its subcellular location is the cytoplasm. Participates actively in the response to hyperosmotic and heat shock by preventing the aggregation of stress-denatured proteins and by disaggregating proteins, also in an autonomous, DnaK-independent fashion. Unfolded proteins bind initially to DnaJ; upon interaction with the DnaJ-bound protein, DnaK hydrolyzes its bound ATP, resulting in the formation of a stable complex. GrpE releases ADP from DnaK; ATP binding to DnaK triggers the release of the substrate protein, thus completing the reaction cycle. Several rounds of ATP-dependent interactions between DnaJ, DnaK and GrpE are required for fully efficient folding. Also involved, together with DnaK and GrpE, in the DNA replication of plasmids through activation of initiation proteins. The sequence is that of Chaperone protein DnaJ from Ehrlichia ruminantium (strain Welgevonden).